The primary structure comprises 199 residues: Nitrile hydratase subunit alpha (199 aa).

4 residues coordinate Fe(3+): C102, C105, S106, and C107. Position 105 is a cysteine sulfinic acid (-SO2H) (C105). C107 is modified (cysteine sulfenic acid (-SOH)).

Belongs to the nitrile hydratase subunit alpha family. In terms of assembly, heterodimer of an alpha and a beta chain. Fe(3+) is required as a cofactor. In terms of processing, oxidation on Cys-105 is essential for the activity. Oxidation on Cys-107 stabilizes the Fe-NO ligand coordinated in the inactive form.

It carries out the reaction an aliphatic primary amide = an aliphatic nitrile + H2O. Inactivated by oxidation of Cys-107 to a sulfenic acid. NHase catalyzes the hydration of various nitrile compounds to the corresponding amides. Industrial production of acrylamide is now being developed using some of the enzymes of this class. The chain is Nitrile hydratase subunit alpha (nthA) from Rhodococcus sp.